The primary structure comprises 299 residues: Protein LacX, chromosomal (299 aa).

The chain is Protein LacX, chromosomal (lacX) from Lactococcus lactis subsp. lactis (Streptococcus lactis).